Consider the following 313-residue polypeptide: Recombination-promoting nuclease pSLT051 (313 aa).

It belongs to the Rpn/YhgA-like nuclease family.

A low activity DNA endonuclease probably yielding 3'-hydroxyl ends. Involved in RecA-independent recombination and horizontal gene transfer. The polypeptide is Recombination-promoting nuclease pSLT051 (Salmonella typhimurium (strain LT2 / SGSC1412 / ATCC 700720)).